A 286-amino-acid polypeptide reads, in one-letter code: Beta-lactamase SHV-34 (286 aa).

Residues 1 to 21 (MRYFRLCIISLLATLPLAVHA) form the signal peptide. S66 acts as the Acyl-ester intermediate in catalysis. C73 and C119 are oxidised to a cystine. The active-site Proton acceptor is the E164. Substrate is bound at residue 230–232 (KTG).

It belongs to the class-A beta-lactamase family.

The catalysed reaction is a beta-lactam + H2O = a substituted beta-amino acid. Its function is as follows. Hydrolyzes ceftazidime and cefotaxime. The polypeptide is Beta-lactamase SHV-34 (bla) (Escherichia coli).